We begin with the raw amino-acid sequence, 229 residues long: MKLLGRKKSYGQDIETSDDNVGSEASLPDTLSRGSSTTAPKGRPTRKRDDADRRHTKKGPITPAPMTASEARARRKSLAPPKCHRAERRAKRAASKAQITDRRERMMAGEEAYLPPRDQGPVRRYIRDLVDARRNALGLFTPSALVLLFITFGVPQLQLYMSPAMLVLLSVMGIDGIILGRKISKLVDVKFPSNTESHWRLGLYAAGRASQMRRLRVPRPQVEHGSSVG.

A disordered region spans residues 1–102 (MKLLGRKKSY…AASKAQITDR (102 aa)). A compositionally biased stretch (basic residues) spans 73–94 (ARRKSLAPPKCHRAERRAKRAA). Helical transmembrane passes span 137–157 (LGLF…VPQL) and 159–179 (LYMS…GIIL).

Its subcellular location is the cell membrane. This is an uncharacterized protein from Mycobacterium leprae (strain TN).